The following is a 612-amino-acid chain: Glycosyltransferase 25 family member (612 aa).

Residues 1–20 (MNKQVIFGLLLACILVCISG) form the signal peptide. Residues asparagine 106, asparagine 227, asparagine 263, and asparagine 524 are each glycosylated (N-linked (GlcNAc...) asparagine). The short motif at 609–612 (HQEL) is the Prevents secretion from ER element.

It belongs to the glycosyltransferase 25 family.

The protein localises to the endoplasmic reticulum lumen. This is Glycosyltransferase 25 family member from Drosophila melanogaster (Fruit fly).